Here is a 209-residue protein sequence, read N- to C-terminus: Probable GTP-binding protein EngB (209 aa).

Positions Glu-24–Leu-198 constitute an EngB-type G domain. GTP contacts are provided by residues Gly-32–Ser-39, Gly-59–Leu-63, Asp-77–Gly-80, Thr-144–Asp-147, and Phe-177–Ala-179. Mg(2+)-binding residues include Ser-39 and Thr-61.

Belongs to the TRAFAC class TrmE-Era-EngA-EngB-Septin-like GTPase superfamily. EngB GTPase family. Mg(2+) serves as cofactor.

Necessary for normal cell division and for the maintenance of normal septation. The chain is Probable GTP-binding protein EngB from Thioalkalivibrio sulfidiphilus (strain HL-EbGR7).